The sequence spans 238 residues: Ankyrin repeat domain-containing protein 49 (238 aa).

The tract at residues 38-57 (TGTQSLWVGNSDEDEEQEEK) is disordered. Position 48 is a phosphoserine (Ser-48). Positions 48–57 (SDEDEEQEEK) are enriched in acidic residues. 4 ANK repeats span residues 72–105 (DPSK…TRDE), 106–135 (DEYT…DVHA), 139–168 (DGWT…DINA), and 172–205 (GLLT…ELKN).

Expressed in spermatogonia, spermatocytes and round spermatids.

It is found in the nucleus. Functionally, may have a role in spermatogenesis where it promotes autophagy in response to serum starvation, via the NF-kappaB pathway. This chain is Ankyrin repeat domain-containing protein 49 (Ankrd49), found in Mus musculus (Mouse).